We begin with the raw amino-acid sequence, 408 residues long: Centromere protein U (408 aa).

A compositionally biased stretch (basic residues) spans 1–33 (DRPRPARLSHARFSKNHSGRTHSMKDKAGRKHR). The disordered stretch occupies residues 1 to 218 (DRPRPARLSH…GKRKKPRSYT (218 aa)). A Phosphothreonine; by PLK1 modification is found at threonine 72. A Phosphothreonine modification is found at threonine 92. Over residues 94 to 103 (QEKEAKRSSD) the composition is skewed to basic and acidic residues. At serine 102 the chain carries Phosphoserine. The residue at position 104 (threonine 104) is a Phosphothreonine. Residues serine 105, serine 110, and serine 114 each carry the phosphoserine modification. Positions 118-127 (SAKKPRRKLK) are enriched in basic residues. Serine 130, serine 133, and serine 135 each carry phosphoserine. Polar residues predominate over residues 176 to 186 (PQKTGPQSAES). Residue lysine 178 forms a Glycyl lysine isopeptide (Lys-Gly) (interchain with G-Cter in SUMO2) linkage. Residues serine 183 and serine 187 each carry the phosphoserine modification. Threonine 192 carries the phosphothreonine modification. Residue serine 222 is modified to Phosphoserine. Positions 273–350 (SNLKEELIKM…LRKAAYFLSN (78 aa)) form a coiled coil. Residues 293 to 310 (KRKNAKIISNIEKKRQRL) carry the Nuclear localization signal motif.

The protein belongs to the CENP-U/AME1 family. Component of the CENPA-NAC complex, at least composed of CENPA, CENPC, CENPH, CENPM, CENPN, CENPT and CENPU. The CENPA-NAC complex interacts with the CENPA-CAD complex, composed of CENPI, CENPK, CENPL, CENPO, CENPP, CENPQ, CENPR and CENPS. Interacts with MLF1. In terms of processing, phosphorylated by PLK1 at Thr-72, creating a self-tethering site that specifically interacts with the polo-box domain of PLK1.

It is found in the cytoplasm. The protein resides in the nucleus. It localises to the chromosome. Its subcellular location is the centromere. The protein localises to the kinetochore. In terms of biological role, component of the CENPA-NAC (nucleosome-associated) complex, a complex that plays a central role in assembly of kinetochore proteins, mitotic progression and chromosome segregation. The CENPA-NAC complex recruits the CENPA-CAD (nucleosome distal) complex and may be involved in incorporation of newly synthesized CENPA into centromeres. Plays an important role in the correct PLK1 localization to the mitotic kinetochores. A scaffold protein responsible for the initial recruitment and maintenance of the kinetochore PLK1 population until its degradation. Involved in transcriptional repression. This Bos taurus (Bovine) protein is Centromere protein U (CENPU).